A 505-amino-acid chain; its full sequence is Histidine ammonia-lyase (505 aa).

The 5-imidazolinone (Ala-Gly) cross-link spans 141–143; the sequence is ASG. The residue at position 142 (serine 142) is a 2,3-didehydroalanine (Ser).

The protein belongs to the PAL/histidase family. Contains an active site 4-methylidene-imidazol-5-one (MIO), which is formed autocatalytically by cyclization and dehydration of residues Ala-Ser-Gly.

It localises to the cytoplasm. The enzyme catalyses L-histidine = trans-urocanate + NH4(+). It functions in the pathway amino-acid degradation; L-histidine degradation into L-glutamate; N-formimidoyl-L-glutamate from L-histidine: step 1/3. This is Histidine ammonia-lyase from Bacillus anthracis.